Reading from the N-terminus, the 152-residue chain is Endoribonuclease YbeY (152 aa).

Zn(2+) contacts are provided by His-116, His-120, and His-126.

Belongs to the endoribonuclease YbeY family. Zn(2+) is required as a cofactor.

Its subcellular location is the cytoplasm. Functionally, single strand-specific metallo-endoribonuclease involved in late-stage 70S ribosome quality control and in maturation of the 3' terminus of the 16S rRNA. This is Endoribonuclease YbeY from Mycoplasma mobile (strain ATCC 43663 / 163K / NCTC 11711) (Mesomycoplasma mobile).